The chain runs to 191 residues: Cell division protein SepF (191 aa).

A compositionally biased stretch (low complexity) spans 151 to 164 (SSSPEEASPSSVST). Residues 151–191 (SSSPEEASPSSVSTEKTPQYSLGKNTTPEPAWGNSKLSAYS) are disordered. Polar residues predominate over residues 165-178 (EKTPQYSLGKNTTP).

Belongs to the SepF family. Homodimer. Interacts with FtsZ.

The protein resides in the cytoplasm. Functionally, cell division protein that is part of the divisome complex and is recruited early to the Z-ring. Probably stimulates Z-ring formation, perhaps through the cross-linking of FtsZ protofilaments. Its function overlaps with FtsA. This Prochlorococcus marinus (strain MIT 9301) protein is Cell division protein SepF.